A 95-amino-acid polypeptide reads, in one-letter code: ESAT-6-like protein EsxH (95 aa).

The protein belongs to the WXG100 family. ESAT-6 subfamily. Forms a tight 1:1 complex with EsxG.

Its subcellular location is the secreted. The sequence is that of ESAT-6-like protein EsxH from Mycolicibacterium smegmatis (strain ATCC 700084 / mc(2)155) (Mycobacterium smegmatis).